Here is a 406-residue protein sequence, read N- to C-terminus: 8-amino-7-oxononanoate synthase (406 aa).

Arg21 provides a ligand contact to substrate. A pyridoxal 5'-phosphate-binding site is contributed by 112–113; sequence GY. His137 is a binding site for substrate. The pyridoxal 5'-phosphate site is built by Ser183, His211, and Thr239. Lys242 is subject to N6-(pyridoxal phosphate)lysine. Thr358 provides a ligand contact to substrate.

The protein belongs to the class-II pyridoxal-phosphate-dependent aminotransferase family. BioF subfamily. Homodimer. Pyridoxal 5'-phosphate is required as a cofactor.

The enzyme catalyses 6-carboxyhexanoyl-[ACP] + L-alanine + H(+) = (8S)-8-amino-7-oxononanoate + holo-[ACP] + CO2. It participates in cofactor biosynthesis; biotin biosynthesis. Its function is as follows. Catalyzes the decarboxylative condensation of pimeloyl-[acyl-carrier protein] and L-alanine to produce 8-amino-7-oxononanoate (AON), [acyl-carrier protein], and carbon dioxide. The chain is 8-amino-7-oxononanoate synthase from Burkholderia cenocepacia (strain HI2424).